Here is a 724-residue protein sequence, read N- to C-terminus: MAGRDPRDRAPRVRNRAPAAVQITAEQLLREAQERQEPTIQAPKQRVQDLEELSEFQARKRTEFESRIRYSRDSILAWTKYAQWEASQNEYERSRSVFERALDVDPRSVDLWIKYTDMELKARNINHARNLFDRAITLLPRVDALWYKYVYLEELLLNVSGARQIFERWMQWEPNDKAWQSYIKLEERYNELDRASAIYERWIACRPIPKNWVAWAKFEEDRGQPDKAREVFQTALEFFGDEEEQVEKAQSVFAAFARMETRLKEFERARVIYKFALARLPRSKSASLYAQYTKFEKQHGDRAGVELTVLGKRRIQYEEELAYDPTNYDAWFSLARLEEDAYRADREDGEDVEPMRVREVYERAVANVPPALEKRYWRRYIYLWLQYAAFEEIDTKDYDRARDVYKAAVKLVPHKTFTFAKLWLAYAYFEIRRLDVSAARKVLGAGIGMCPKPKLFTGYIELEMRLREFDRVRTLYEKFLTYDPSLSSAWIQWTQVESAVEDFERVRAIFELAVQQSLDMPEIVWKAYIDFEAGEGERERARNLYERLLERTSHVKVWISYALMEIATLGGGEDEDGNEIEGEAGDADLARKVFERGYKDLRAKGEKEDRAVLLESWKSFEQEHGDEEMLAKVEDMLPTTRKRWRKAEDGSGELEEYWDLVFPDDEKEANPTSFKFFQAAQAWAQQRAGQGEEGGLSYDLPSDSESENEDEDGDNREEEGMDQD.

16 HAT repeats span residues 55–87, 89–121, 123–155, 157–188, 190–221, 223–262, 264–298, 308–340, 352–386, 396–432, 434–465, 467–499, 501–534, 536–567, 585–626, and 635–667; these read EFQA…WEAS, NEYE…MELK, RNIN…LEEL, LNVS…LEER, NELD…FEED, GQPD…METR, KEFE…FEKQ, TVLG…LEED, VEPM…LWLQ, KDYD…FEIR, LDVS…LEMR, REFD…VESA, EDFE…FEAG, GERE…MEIA, GDAD…EHGD, and DMLP…DDEK. The tract at residues 681–724 is disordered; that stretch reads QAWAQQRAGQGEEGGLSYDLPSDSESENEDEDGDNREEEGMDQD. Over residues 702-724 the composition is skewed to acidic residues; that stretch reads SDSESENEDEDGDNREEEGMDQD.

Belongs to the crooked-neck family. As to quaternary structure, associated with the spliceosome.

Its subcellular location is the nucleus. In terms of biological role, involved in pre-mRNA splicing and cell cycle progression. Required for the spliceosome assembly and initiation of the DNA replication. This Cryptococcus neoformans var. grubii serotype A (strain H99 / ATCC 208821 / CBS 10515 / FGSC 9487) (Filobasidiella neoformans var. grubii) protein is Pre-mRNA-splicing factor CLF1 (CLF1).